A 192-amino-acid polypeptide reads, in one-letter code: NOP protein chaperone 1 (192 aa).

The segment covering 1 to 26 (MEVSGESHSGPSCSSSSRDGSGVSVS) has biased composition (low complexity). The interval 1 to 39 (MEVSGESHSGPSCSSSSRDGSGVSVSKELLMAGSGGRGG) is disordered. Phosphoserine occurs at positions 34 and 66. The disordered stretch occupies residues 118–192 (FEMNQSHSKE…SENKEKQENK (75 aa)). A compositionally biased stretch (acidic residues) spans 129–152 (DSSEENSQDSSEESSESEDEDDST). Residues 164 to 177 (KLPHSEDGKGKIEV) show a composition bias toward basic and acidic residues. At serine 180 the chain carries Phosphoserine.

Interacts with NOP58, RUVBL1 and RUVBL2; the interactions are direct and NOPCHAP1 bridges the association of NOP58 with RUVBL1:RUVBL2 even in absence of snoRNAs. The interactions with RUVBL1 and RUVBL2 are disrupted upon ATP binding.

Its subcellular location is the nucleus. Functionally, client-loading PAQosome/R2TP complex cofactor that selects NOP58 to promote box C/D small nucleolar ribonucleoprotein (snoRNP) assembly. Acts as a bridge between NOP58 and the R2TP complex via RUVBL1:RUVBL2. The polypeptide is NOP protein chaperone 1 (NOPCHAP1) (Bos taurus (Bovine)).